Here is a 328-residue protein sequence, read N- to C-terminus: D-cysteine desulfhydrase (328 aa).

The residue at position 51 (lysine 51) is an N6-(pyridoxal phosphate)lysine.

The protein belongs to the ACC deaminase/D-cysteine desulfhydrase family. As to quaternary structure, homodimer. Requires pyridoxal 5'-phosphate as cofactor.

It catalyses the reaction D-cysteine + H2O = hydrogen sulfide + pyruvate + NH4(+) + H(+). Catalyzes the alpha,beta-elimination reaction of D-cysteine and of several D-cysteine derivatives. It could be a defense mechanism against D-cysteine. This is D-cysteine desulfhydrase from Salmonella paratyphi A (strain AKU_12601).